The chain runs to 110 residues: Inner kinetochore subunit mhf1 (110 aa).

This sequence belongs to the TAF9 family. CENP-S/MHF1 subfamily. In terms of assembly, the MHF histone-fold complex is a heterotetramer of 2 mhf1-mhf2 heterodimers. Component of the inner kinetochore constitutive centromere-associated network (CCAN) (also known as central kinetochore Sim4 complex in fission yeast), which is composed of at least cnl2, cnp3, cnp20, fta1, fta2, fta3, fta4, fta6, fta7, mal2, mhf1, mhf2, mis6, mis15, mis17, sim4 and wip1.

The protein resides in the nucleus. In terms of biological role, component of a FANCM-MHF complex that promotes gene conversion at blocked replication forks, probably by reversal of the stalled fork. FANCM-MHF promotes non-crossover recombination. In Schizosaccharomyces pombe (strain 972 / ATCC 24843) (Fission yeast), this protein is Inner kinetochore subunit mhf1.